The sequence spans 824 residues: ATP-dependent RNA helicase drs1 (824 aa).

The disordered stretch occupies residues 1–305 (MAGTKKRANA…EEKTSESAMA (305 aa)). 2 stretches are compositionally biased toward acidic residues: residues 11-37 (DDDF…EGDD) and 90-108 (QEEE…EDDG). Positions 137–166 (EEGKGGDKKAVDIDDIISRRQAKKEAELIR) are enriched in basic and acidic residues. Acidic residues-rich tracts occupy residues 178–203 (EFSE…ELLA), 212–257 (DGEE…DDDS), and 273–284 (DSDEESQVDAEE). Positions 285–305 (EEKRKAFFAPEEEKTSESAMA) are enriched in basic and acidic residues. The short motif at 309-337 (RSFQEFNLSRPILRGLAGVNFSNPTPIQR) is the Q motif element. Positions 340–514 (IPVALLGKDI…RVGLNRPVRL (175 aa)) constitute a Helicase ATP-binding domain. 353 to 360 (AVTGSGKT) serves as a coordination point for ATP. The short motif at 462–465 (DEAD) is the DEAD box element. Residues 541–685 (RLGYLLYLCK…KIASRVIEPA (145 aa)) enclose the Helicase C-terminal domain. Basic and acidic residues-rich tracts occupy residues 739–749 (KRTWFETERDK) and 767–790 (MSKK…RQRQ). Positions 739–824 (KRTWFETERD…KKDNKKKGKK (86 aa)) are disordered.

Belongs to the DEAD box helicase family. DDX27/DRS1 subfamily. Associates with pre-ribosomal particles.

It is found in the nucleus. The protein resides in the nucleolus. The catalysed reaction is ATP + H2O = ADP + phosphate + H(+). In terms of biological role, ATP-binding RNA helicase involved in ribosome assembly. This Aspergillus niger (strain ATCC MYA-4892 / CBS 513.88 / FGSC A1513) protein is ATP-dependent RNA helicase drs1 (drs1).